The primary structure comprises 473 residues: Crt homolog 1 (473 aa).

Over 1-49 (MTNNDKEKQPLLSSINNEDDNGATINIVEPVPWYSNIPQKIKNSMSKET) the chain is Cytoplasmic. Residues 50-70 (ITILIYVVLYVTSGVINSVLL) traverse the membrane as a helical segment. Residues 71 to 80 (KKVMNKFTNY) lie on the Vacuolar side of the membrane. A helical transmembrane segment spans residues 81-101 (AFFLSQLTNFGYVPIFGAVTA). The Cytoplasmic portion of the chain corresponds to 102-121 (YKIFFTKDIPQETRDFPTRK). A helical transmembrane segment spans residues 122–142 (FAIMGALDAITGFFVVIGGVS). At 143–146 (TSGP) the chain is on the vacuolar side. Residues 147–167 (LQQLLNQAIIPFTMIASFIFL) form a helical membrane-spanning segment. At 168–175 (KERYSLIQ) the chain is on the cytoplasmic side. The chain crosses the membrane as a helical span at residues 176–196 (LGGALVIIGGVVTSLIPSLLG). Residues 197-207 (GSSGGNKPFWN) are Vacuolar-facing. Residues 208–228 (FFYLLSVIPGALSNVYKDIGF) traverse the membrane as a helical segment. Topologically, residues 229 to 248 (QAVADMDVWYLQYWDSLYQS) are cytoplasmic. Residues 249–269 (IFGLFLFPVNNWLPPPATVKF) traverse the membrane as a helical segment. Residues 270-322 (EQILPFMKEGAECLAGINSIIPSYINGTSSFTATSCTYAPDATITCDDCHNAW) lie on the Vacuolar side of the membrane. N295 carries N-linked (GlcNAc...) asparagine glycosylation. A helical transmembrane segment spans residues 323–343 (IVIILYMTINIIYNIFILLVL). Residues 344-352 (KHAGATVYS) are Cytoplasmic-facing. Residues 353–373 (IANTLRLPLTNIVFSIHFIMG) traverse the membrane as a helical segment. Residue S374 is a topological domain, vacuolar. Residues 375 to 395 (AVSPFSGLSVAGLVIILVGLG) form a helical membrane-spanning segment. At 396-473 (GYRVGSMIKQ…AANNNNYGDA (78 aa)) the chain is on the cytoplasmic side.

It belongs to the CRT-like transporter family.

It localises to the vacuole membrane. In terms of biological role, nutrient transporter. Involved in maintaining the osmotic homeostasis of the digestive vacuole. The polypeptide is Crt homolog 1 (crtp1) (Dictyostelium discoideum (Social amoeba)).